The chain runs to 414 residues: Serine/threonine transporter SstT (414 aa).

At 2 to 15 the chain is on the cytoplasmic side; it reads TTQRSPGLFRRLAH. Residues 16–36 traverse the membrane as a helical segment; the sequence is GSLVKQILVGLVLGILLAWIS. Topologically, residues 37–45 are periplasmic; that stretch reads KPAAEAVGL. Residues 46 to 66 traverse the membrane as a helical segment; that stretch reads LGTLFVGALKAVAPILVLMLV. At 67-83 the chain is on the cytoplasmic side; sequence MASIANHQHGQKTNIRP. Residues 84–104 traverse the membrane as a helical segment; the sequence is ILFLYLLGTFSAALAAVVFSF. Over 105 to 142 the chain is Periplasmic; it reads AFPSTLHLSSSAGDISPPSGIVEVMRGLVMSMVSNPID. A helical membrane pass occupies residues 143–163; the sequence is ALLKGNYIGILVWAIGLGFAL. The Cytoplasmic segment spans residues 164 to 179; the sequence is RHGNETTKNLVNDMSN. The chain crosses the membrane as a helical span at residues 180–200; it reads AVTFMVKLVIRFAPIGIFGLV. At 201 to 217 the chain is on the periplasmic side; the sequence is SSTLATTGFSTLWGYAQ. Residues 218–238 traverse the membrane as a helical segment; it reads LLVVLVGCMLLVALVVNPLLV. At 239-299 the chain is on the cytoplasmic side; sequence WWKIRRNPFP…VSIPLGATIN (61 aa). Residues 300-320 traverse the membrane as a helical segment; that stretch reads MAGAAITITVLTLAAVNTLGI. The Periplasmic segment spans residues 321 to 331; it reads PVDLPTALLLS. The chain crosses the membrane as a helical span at residues 332 to 352; sequence VVASLCACGASGVAGGSLLLI. Over 353-414 the chain is Cytoplasmic; that stretch reads PLACNMFGIS…DRLANSALRN (62 aa).

The protein belongs to the dicarboxylate/amino acid:cation symporter (DAACS) (TC 2.A.23) family.

It localises to the cell inner membrane. It carries out the reaction L-serine(in) + Na(+)(in) = L-serine(out) + Na(+)(out). The catalysed reaction is L-threonine(in) + Na(+)(in) = L-threonine(out) + Na(+)(out). Functionally, involved in the import of serine and threonine into the cell, with the concomitant import of sodium (symport system). In Shigella flexneri serotype 5b (strain 8401), this protein is Serine/threonine transporter SstT.